A 185-amino-acid polypeptide reads, in one-letter code: Translation initiation factor IF-3, chloroplastic (185 aa).

It belongs to the IF-3 family. In terms of assembly, monomer.

The protein resides in the plastid. Its subcellular location is the chloroplast. Functionally, IF-3 binds to the 30S ribosomal subunit and shifts the equilibrium between 70S ribosomes and their 50S and 30S subunits in favor of the free subunits, thus enhancing the availability of 30S subunits on which protein synthesis initiation begins. The polypeptide is Translation initiation factor IF-3, chloroplastic (Cyanidium caldarium (Red alga)).